The sequence spans 192 residues: UPF0301 protein BMA10247_1859 (192 aa).

This sequence belongs to the UPF0301 (AlgH) family.

This is UPF0301 protein BMA10247_1859 from Burkholderia mallei (strain NCTC 10247).